Consider the following 1122-residue polypeptide: RecBCD enzyme subunit RecC (1122 aa).

Belongs to the RecC family. In terms of assembly, heterotrimer of RecB, RecC and RecD. All subunits contribute to DNA-binding. Interacts with YgbT (Cas1). (Microbial infection) Lambda virus GamS protein interacts with the enzyme without displacing any of the subunits.

With respect to regulation, after reacting with DNA bearing a Chi site the holoenzyme is disassembled and loses exonuclease activity, DNA unwinding and Chi-directed DNA cleavage; RecB remains complexed with ssDNA, which may prevent holoenzyme reassembly. High levels of Mg(2+) (13 mM MgCl(2+)) or incubation with DNase allow holoenzyme reassembly, suggesting it is DNA bound to RecB that prevents reassembly. Its activity is regulated as follows. (Microbial infection) RecBCD is inhibited by the lambda virus gam protein (both GamL and GamS isoforms); in vitro a short preincubation prior to adding DNA results in maximal inhibition. In terms of biological role, a helicase/nuclease that prepares dsDNA breaks (DSB) for recombinational DNA repair. Binds to DSBs and unwinds DNA via a rapid (&gt;1 kb/second) and highly processive (&gt;30 kb) ATP-dependent bidirectional helicase. Unwinds dsDNA until it encounters a Chi (crossover hotspot instigator, 5'-GCTGGTGG-3') sequence from the 3' direction. Cuts ssDNA a few nucleotides 3' to Chi site, by nicking one strand or switching the strand degraded (depending on the reaction conditions). The properties and activities of the enzyme are changed at Chi. The Chi-altered holoenzyme produces a long 3'-ssDNA overhang which facilitates RecA-binding to the ssDNA for homologous DNA recombination and repair. Holoenzyme degrades any linearized DNA that is unable to undergo homologous recombination. In the holoenzyme this subunit almost certainly recognizes the wild-type Chi sequence, when added to isolated RecB increases its ATP-dependent helicase processivity. The RecBC complex requires the RecD subunit for nuclease activity, but can translocate along ssDNA in both directions. The RecBCD complex does not unwind G-quadruplex DNA. The polypeptide is RecBCD enzyme subunit RecC (Escherichia coli (strain K12)).